The chain runs to 193 residues: 7-methyl-GTP pyrophosphatase (193 aa).

Aspartate 68 serves as the catalytic Proton acceptor.

This sequence belongs to the Maf family. YceF subfamily. A divalent metal cation is required as a cofactor.

Its subcellular location is the cytoplasm. It carries out the reaction N(7)-methyl-GTP + H2O = N(7)-methyl-GMP + diphosphate + H(+). In terms of biological role, nucleoside triphosphate pyrophosphatase that hydrolyzes 7-methyl-GTP (m(7)GTP). May have a dual role in cell division arrest and in preventing the incorporation of modified nucleotides into cellular nucleic acids. This chain is 7-methyl-GTP pyrophosphatase, found in Chromobacterium violaceum (strain ATCC 12472 / DSM 30191 / JCM 1249 / CCUG 213 / NBRC 12614 / NCIMB 9131 / NCTC 9757 / MK).